A 373-amino-acid polypeptide reads, in one-letter code: MKSGRFIGVMSGTSLDGVDVVLAAIDETMVAQQASLTWPIPVHLKKGILDICQGQPLTLSQLGQLDTQLGRLFAQAVNALLARQRLQPRDIVAIGCHGQTVWHEPTGEAPHTLQIGDNNHIVAHTGITVVGDFRRRDIALGGQGAPLVPAFHHALLGHPTEKRMVLNIGGIANLSLLFPGQAVRGYDTGPGNMLMDAWIWRQCAQPYDKDAAWAKEGQVILPLLQKMLRDPYFAASAPKSTGREYFNYGWLERHLTAFPGADARDVQATLAELTAVSIAQQVLLNGGCERLMVCGGGSRNPLVMARLAALLPGIEVSTTDKAGISGDDMEALAFAWLAWRTLAGLPGNLPSVTGATEASVLGAIYPANPITQS.

ATP is bound at residue 12–19; the sequence is GTSLDGVD.

It belongs to the anhydro-N-acetylmuramic acid kinase family.

It carries out the reaction 1,6-anhydro-N-acetyl-beta-muramate + ATP + H2O = N-acetyl-D-muramate 6-phosphate + ADP + H(+). It functions in the pathway amino-sugar metabolism; 1,6-anhydro-N-acetylmuramate degradation. The protein operates within cell wall biogenesis; peptidoglycan recycling. Its function is as follows. Catalyzes the specific phosphorylation of 1,6-anhydro-N-acetylmuramic acid (anhMurNAc) with the simultaneous cleavage of the 1,6-anhydro ring, generating MurNAc-6-P. Is required for the utilization of anhMurNAc either imported from the medium or derived from its own cell wall murein, and thus plays a role in cell wall recycling. In Salmonella newport (strain SL254), this protein is Anhydro-N-acetylmuramic acid kinase.